A 356-amino-acid polypeptide reads, in one-letter code: 3-isopropylmalate dehydrogenase (356 aa).

Residues arginine 95, arginine 105, arginine 133, and aspartate 223 each coordinate substrate. Mg(2+) is bound by residues aspartate 223, aspartate 247, and aspartate 251. Glycine 281 to asparagine 293 contacts NAD(+).

This sequence belongs to the isocitrate and isopropylmalate dehydrogenases family. LeuB type 1 subfamily. As to quaternary structure, homodimer. Mg(2+) serves as cofactor. The cofactor is Mn(2+).

The protein localises to the cytoplasm. It catalyses the reaction (2R,3S)-3-isopropylmalate + NAD(+) = 4-methyl-2-oxopentanoate + CO2 + NADH. The protein operates within amino-acid biosynthesis; L-leucine biosynthesis; L-leucine from 3-methyl-2-oxobutanoate: step 3/4. In terms of biological role, catalyzes the oxidation of 3-carboxy-2-hydroxy-4-methylpentanoate (3-isopropylmalate) to 3-carboxy-4-methyl-2-oxopentanoate. The product decarboxylates to 4-methyl-2 oxopentanoate. The protein is 3-isopropylmalate dehydrogenase of Neisseria gonorrhoeae (strain ATCC 700825 / FA 1090).